Here is a 171-residue protein sequence, read N- to C-terminus: Adenine phosphoribosyltransferase (171 aa).

The protein belongs to the purine/pyrimidine phosphoribosyltransferase family. In terms of assembly, homodimer.

It localises to the cytoplasm. It carries out the reaction AMP + diphosphate = 5-phospho-alpha-D-ribose 1-diphosphate + adenine. It participates in purine metabolism; AMP biosynthesis via salvage pathway; AMP from adenine: step 1/1. Its function is as follows. Catalyzes a salvage reaction resulting in the formation of AMP, that is energically less costly than de novo synthesis. This chain is Adenine phosphoribosyltransferase, found in Prochlorococcus marinus (strain MIT 9515).